A 296-amino-acid polypeptide reads, in one-letter code: Cytidine deaminase (296 aa).

2 consecutive CMP/dCMP-type deaminase domains span residues 47 to 167 (EESE…FGPS) and 186 to 296 (DSSD…IDPA). A substrate-binding site is contributed by 88 to 90 (NLE). H101 serves as a coordination point for Zn(2+). Catalysis depends on E103, which acts as the Proton donor. The Zn(2+) site is built by C128 and C131.

It belongs to the cytidine and deoxycytidylate deaminase family. Homodimer. Requires Zn(2+) as cofactor.

The enzyme catalyses cytidine + H2O + H(+) = uridine + NH4(+). The catalysed reaction is 2'-deoxycytidine + H2O + H(+) = 2'-deoxyuridine + NH4(+). Its function is as follows. This enzyme scavenges exogenous and endogenous cytidine and 2'-deoxycytidine for UMP synthesis. The polypeptide is Cytidine deaminase (Shewanella woodyi (strain ATCC 51908 / MS32)).